The sequence spans 550 residues: Complement control protein (550 aa).

Residues 1–19 (MAFLRQTLWILWTFTMVIG) form the signal peptide. Sushi domains lie at 23–83 (EKCS…TCNK), 84–150 (KSCP…FCEK), 151–209 (EKCH…TCEL), and 210–268 (AGCK…KCVL). Intrachain disulfides connect cysteine 25–cysteine 68, cysteine 53–cysteine 81, cysteine 86–cysteine 131, cysteine 116–cysteine 148, cysteine 153–cysteine 194, cysteine 180–cysteine 207, cysteine 212–cysteine 254, and cysteine 240–cysteine 266. Residues asparagine 63 and asparagine 111 are each glycosylated (N-linked (GlcNAc...) asparagine; by host). Asparagine 197 carries N-linked (GlcNAc...) asparagine; by host glycosylation. N-linked (GlcNAc...) asparagine; by host glycosylation is found at asparagine 255, asparagine 275, and asparagine 299. The tract at residues 269–338 (EDIDDPNNSN…TSEGFNETTT (70 aa)) is disordered. 2 stretches are compositionally biased toward polar residues: residues 288–302 (EKPN…NYTE) and 312–321 (TAATCDTNCE). N-linked (GlcNAc...) asparagine; by host glycosylation is found at asparagine 334, asparagine 371, asparagine 374, and asparagine 378. 2 disordered regions span residues 387-408 (TPTS…NYNT) and 420-516 (IEEG…RPPA). Positions 424 to 440 (PSNSTTSEKATASTLSH) are enriched in polar residues. N-linked (GlcNAc...) asparagine; by host glycans are attached at residues asparagine 426, asparagine 445, asparagine 455, and asparagine 483. Over residues 450–476 (IYTTLNKTTQLPSTNKPTNSQAKSSTK) the composition is skewed to polar residues. The span at 484–495 (KTTSNPAISLTD) shows a compositional bias: polar residues. Residues 528 to 548 (IGLLTAVALTCGLITLFHYLF) form a helical membrane-spanning segment.

It is found in the host membrane. It localises to the virion membrane. Its function is as follows. Inhibits the complement component of the host innate immune response. Regulates host C3 convertases, accelerating their decay, and acts as a cofactor for factor I degradation of C4b and C3b. Also binds heparin, and therefore may play two distinct roles when incorporated in virion membranes: immune evasion and host cell binding. The chain is Complement control protein (ORF4) from Human herpesvirus 8 type P (isolate GK18) (HHV-8).